The sequence spans 371 residues: MSQWGSGAILVQPDSLGRGYDGDWHTAVATRGGGVVQLNLVNRRAVAFMPKVSGDSGWAVGRVSLDLRMAMPADFCAIIHAPALASPGHHVILGLIDSGYRGTVMAVVVAPKRTREFAPGTLRVDVTFLDILATPPALTEPISLRQFPQLAPPPPTGAGIREDPWLEGALGAPSVTTALPARRRGRSLVYAGELTPVQTEHGDGVREAIAFLPKREEDAGFDIVVRRPVTVPANGTTVVQPSLRMLHADAGPAACYVLGRSSLNARGLLVVPTRWLPGHVCAFVVYNLTGVPVTLEAGAKVAQLLVAGADALPWIPPDNFHGTKALRNYPRGVPDSTAEPRNPPLLVFTNEFDAEAPPSERGTGGFGSTGI.

Residues 260 to 262 (RSS) and 366 to 367 (FG) each bind substrate. The disordered stretch occupies residues 350 to 371 (NEFDAEAPPSERGTGGFGSTGI). Positions 362–371 (GTGGFGSTGI) are enriched in gly residues.

Belongs to the dUTPase family. Mg(2+) serves as cofactor.

The catalysed reaction is dUTP + H2O = dUMP + diphosphate + H(+). Involved in nucleotide metabolism: produces dUMP, the immediate precursor of thymidine nucleotides and decreases the intracellular concentration of dUTP to avoid uracil incorporation into viral DNA. In Homo sapiens (Human), this protein is Deoxyuridine 5'-triphosphate nucleotidohydrolase.